A 1185-amino-acid polypeptide reads, in one-letter code: Zinc finger SWIM domain-containing protein 5 (1185 aa).

Over residues 1–10 (MADGGEREEL) the composition is skewed to basic and acidic residues. Disordered stretches follow at residues 1–45 (MADG…GGAG) and 123–153 (AGAA…GSAP). The SWIM-type zinc-finger motif lies at 219–256 (YKVAISFDRCKITSVTCGCGNKDIFYCAHVVALSLYRI).

The chain is Zinc finger SWIM domain-containing protein 5 (ZSWIM5) from Homo sapiens (Human).